Reading from the N-terminus, the 667-residue chain is MSNAHHDAFDKATKAGFIIALGIVYGDIGTSPLYTMQSLVDNQGGLSQVSEAFILGSVSLIIWTLTLVTTIKYVLIALKADNHHEGGIFSLFTLVRRMSRWLIIPAMLGGATLLSDGALTPAVTVTSAIEGLKAVPELSSIYQNQTNVILTTLLILMVLFGLQRFGTGVIGKLFGPVMLVWFSVLGISGLLNSLQHLEILKAINPYYALHLLVSPENHRGIFILGSIFLATTGAEALYSDLGHVGRGNIYASWPFVKVCIILSYCGQAAWILAHKDSGIALNPFFASVPEGLRVYLVILATLAAIIASQALISGSFTLVSEAMRLKIFPLFKITYPGANLGQLYIPVINWSLFAVTSCTVLYFRTSAHMEAAYGLAITITMLMTTILLAYYLIKEGVKPLLASLLMAFFAFIEFIFFLASAVKFMHGGYVVVVLALAIVFVMVIWHAGTMIVAKYVKSLSLNDYKHQIKLLRDDLRFDLYQTNVVYLTNRMKKDLIDRSILYSILDKRPKRAQVYWFVNVRVTDEPYTATYKVDMLETDYIVCVELYLGFRMPQTVPRYLRTIVQDLMESGRLPKQAQDYTITPGREVGDFRFVIIEERVSHARQLSTLERFVMQTKASIKHVTASPMRWFGLQYSEATVEVVPLLLSDVLKLPIKEIKACTKDEKA.

12 consecutive transmembrane segments (helical) span residues 16–36 (GFIIALGIVYGDIGTSPLYTM), 58–78 (VSLIIWTLTLVTTIKYVLIAL), 101–121 (WLIIPAMLGGATLLSDGALTP), 146–166 (TNVILTTLLILMVLFGLQRFG), 167–187 (TGVIGKLFGPVMLVWFSVLGI), 221–241 (IFILGSIFLATTGAEALYSDL), 253–273 (WPFVKVCIILSYCGQAAWILA), 294–314 (VYLVILATLAAIIASQALISG), 343–363 (LYIPVINWSLFAVTSCTVLYF), 373–393 (YGLAITITMLMTTILLAYYLI), 399–419 (PLLASLLMAFFAFIEFIFFLA), and 424–444 (FMHGGYVVVVLALAIVFVMVI).

The protein belongs to the HAK/KUP transporter (TC 2.A.72) family.

Its subcellular location is the cell membrane. It carries out the reaction K(+)(in) + H(+)(in) = K(+)(out) + H(+)(out). Functionally, transport of potassium into the cell. Likely operates as a K(+):H(+) symporter. The polypeptide is Probable potassium transport system protein Kup (Streptococcus equi subsp. equi (strain 4047)).